Here is a 613-residue protein sequence, read N- to C-terminus: UBX domain-containing protein 3 (613 aa).

Disordered regions lie at residues 67 to 223 (PAAA…PINP) and 453 to 472 (MNEQ…RNQQ). The span at 68-82 (AAASGRNAGASSSSR) shows a compositional bias: low complexity. The segment covering 137-149 (THHRGAAIPRQKR) has biased composition (basic residues). Residues 158 to 169 (SSSGSSSASFSS) are compositionally biased toward low complexity. A coiled-coil region spans residues 452-517 (RMNEQSERRE…EEEECVRRQT (66 aa)). Residues 531 to 610 (PLAEIINVKF…KWPAREQIFV (80 aa)) enclose the UBX domain. An Interaction with cdc-48 motif is present at residues 582–584 (FPK).

In terms of assembly, forms a complex composed of ubxn-3, cdc-48.1, ufd-1 and npl-4.1. Forms a complex composed of ubxn-3, cdc-48.1 and/or cdc-48.2 and substrate cdt-1. Interacts (via FPK motif) with cdc-48.1 (via N-terminus) and cdc-48.2 (via N-terminus). Interacts (via N-terminus) with cdt-1 and ubiquitinated protein substrates; the interaction is cdc-48-independent. May interact with npl-4.1. Expressed in the germline (at protein level). Expressed in spermatocytes but not in mature sperm (at protein level). Expressed in the spermatheca and nerve cells.

It localises to the nucleus. The protein localises to the cytoplasm. It is found in the perinuclear region. The protein resides in the chromosome. Ubiquitin-binding protein which acts as an adapter for ATPase cdc-48.1 and/or cdc-48.2, conferring substrate specificity. Together with ubxn-1 and ubxn-2, plays a role in hermaphrodite spermatogenesis probably by promoting the degradation of sex determination terminal factor tra-1. During mitosis, ensures the degradation of DNA licensing factor cdt-1 and the disassembly of the DNA replication CMG helicase complex by promoting the dissociation from chromatin of several of its components including cdc-45 and sld-5. This is UBX domain-containing protein 3 from Caenorhabditis elegans.